Here is a 263-residue protein sequence, read N- to C-terminus: Trans-aconitate 2-methyltransferase (263 aa).

Belongs to the methyltransferase superfamily. Tam family.

The protein localises to the cytoplasm. It catalyses the reaction trans-aconitate + S-adenosyl-L-methionine = (E)-3-(methoxycarbonyl)pent-2-enedioate + S-adenosyl-L-homocysteine. Functionally, catalyzes the S-adenosylmethionine monomethyl esterification of trans-aconitate. The polypeptide is Trans-aconitate 2-methyltransferase (Mycobacterium marinum (strain ATCC BAA-535 / M)).